Consider the following 261-residue polypeptide: Undecaprenyl-diphosphatase (261 aa).

The next 8 membrane-spanning stretches (helical) occupy residues 9-31 (ALLLGVVEGLTEFLPVSSTGHLT), 46-66 (FLKTFLVAIQLGAILAVLLLY), 80-100 (IAVAFVPTGVIGFLFYPLIKG), 102-122 (ILGNDAVVAFFLFFVGAVLLF), 137-157 (ALPLARVAWIGVFQGLAALFP), 180-200 (AEFSFLLALPTMFAAVGYDLW), 209-229 (GGWSLLLLGFLAALVTALVTV), and 240-260 (GFRPFALYRMALAAVYAFFFL).

The protein belongs to the UppP family.

The protein localises to the cell inner membrane. The enzyme catalyses di-trans,octa-cis-undecaprenyl diphosphate + H2O = di-trans,octa-cis-undecaprenyl phosphate + phosphate + H(+). In terms of biological role, catalyzes the dephosphorylation of undecaprenyl diphosphate (UPP). Confers resistance to bacitracin. The polypeptide is Undecaprenyl-diphosphatase (Thermus thermophilus (strain ATCC 27634 / DSM 579 / HB8)).